Here is a 274-residue protein sequence, read N- to C-terminus: Caldesmon, smooth muscle (274 aa).

Disordered stretches follow at residues Ser1–Lys102 and Lys179–Pro274. 2 stretches are compositionally biased toward basic and acidic residues: residues Gly12–Gln21 and Asp28–Pro95. Residues Val182–Lys194 show a composition bias toward polar residues. Basic and acidic residues-rich tracts occupy residues Ser226–Val245 and Lys260–Pro274.

Its subcellular location is the cytoplasm. The protein resides in the cytoskeleton. The protein localises to the myofibril. It localises to the stress fiber. Functionally, control of actomyosin interactions in smooth muscle and nonmuscle cells (could act as a bridge between myosin and actin filaments). Inhibits the actin-activated ATPase of myosin this inhibition is attenuated by calcium-calmodulin and is potentiated by tropomyosin. Interacts with actin, myosin, 2 molecules of tropomyosin and with calmodulin. This chain is Caldesmon, smooth muscle (CALD1), found in Meleagris gallopavo (Wild turkey).